The chain runs to 394 residues: Protein arginine N-methyltransferase 8 (394 aa).

Glycine 2 is lipidated: N-myristoyl glycine. The segment at 16–40 is disordered; sequence MAENAAESTEVNSPPSQPPQPVVPA. Short sequence motifs (SH3-binding) lie at residues 29–42 and 53–58; these read PPSQ…PAKP and PSCPGR. Residues 30-39 show a composition bias toward pro residues; it reads PSQPPQPVVP. Position 58 is an omega-N-methylarginine; by autocatalysis (arginine 58). Position 73 is an asymmetric dimethylarginine; by autocatalysis (arginine 73). Residues 73–394 enclose the SAM-dependent MTase PRMT-type domain; that stretch reads RDYYFDSYAH…TSVSNDYKMR (322 aa). S-adenosyl-L-methionine contacts are provided by residues histidine 86, arginine 95, glycine 119, 119–122, glutamate 141, and glutamate 170; that span reads GSGT. Residues glutamate 185 and glutamate 194 contribute to the active site.

It belongs to the class I-like SAM-binding methyltransferase superfamily. Protein arginine N-methyltransferase family. PRMT8 subfamily. Homodimer. Tetramer; individual homodimers associates to form a homotetramer. Homooctamer; individual homodimers associates to form a homooctamer and homooligomerization is required for proper localization to the cell membrane. Heterodimer with PRMT1; heterodimerization may recruit PRMT1 activity to the plasma membrane. Interacts with PRMT2 (via the SH3 domain). Interacts with FYN (via the SH3 domain). Interacts with EWS; independently of EWS methylation status. In terms of tissue distribution, brain-specific.

The protein localises to the cell membrane. It catalyses the reaction L-arginyl-[protein] + S-adenosyl-L-methionine = N(omega)-methyl-L-arginyl-[protein] + S-adenosyl-L-homocysteine + H(+). The enzyme catalyses L-arginyl-[protein] + 2 S-adenosyl-L-methionine = N(omega),N(omega)-dimethyl-L-arginyl-[protein] + 2 S-adenosyl-L-homocysteine + 2 H(+). Functionally, S-adenosyl-L-methionine-dependent and membrane-associated arginine methyltransferase that can both catalyze the formation of omega-N monomethylarginine (MMA) and asymmetrical dimethylarginine (aDMA) in proteins such as NIFK, myelin basic protein, histone H4, H2A and H2A/H2B dimer. Able to mono- and dimethylate EWS protein; however its precise role toward EWS remains unclear as it still interacts with fully methylated EWS. The protein is Protein arginine N-methyltransferase 8 of Homo sapiens (Human).